The following is a 453-amino-acid chain: Bifunctional protein GlmU (453 aa).

Residues 1–225 (MHAHVILAAG…AEEALGVNTR (225 aa)) are pyrophosphorylase. UDP-N-acetyl-alpha-D-glucosamine-binding positions include 7 to 10 (LAAG), Lys-21, Gln-72, and 77 to 78 (GT). Asp-102 lines the Mg(2+) pocket. UDP-N-acetyl-alpha-D-glucosamine-binding residues include Gly-138, Glu-152, Asn-167, and Asn-223. Asn-223 lines the Mg(2+) pocket. The tract at residues 226-246 (EELARVEGVLLRRLRAEWMGK) is linker. Residues 247 to 453 (GVRMILPETI…GYALRKLGEG (207 aa)) are N-acetyltransferase. Residues Arg-329 and Lys-347 each coordinate UDP-N-acetyl-alpha-D-glucosamine. His-359 acts as the Proton acceptor in catalysis. UDP-N-acetyl-alpha-D-glucosamine is bound by residues Tyr-362 and Asn-373. Acetyl-CoA-binding positions include Ala-376, 382 to 383 (NY), Ser-401, Ala-419, and Arg-436.

The protein in the N-terminal section; belongs to the N-acetylglucosamine-1-phosphate uridyltransferase family. It in the C-terminal section; belongs to the transferase hexapeptide repeat family. As to quaternary structure, homotrimer. It depends on Mg(2+) as a cofactor.

The protein localises to the cytoplasm. The enzyme catalyses alpha-D-glucosamine 1-phosphate + acetyl-CoA = N-acetyl-alpha-D-glucosamine 1-phosphate + CoA + H(+). The catalysed reaction is N-acetyl-alpha-D-glucosamine 1-phosphate + UTP + H(+) = UDP-N-acetyl-alpha-D-glucosamine + diphosphate. The protein operates within nucleotide-sugar biosynthesis; UDP-N-acetyl-alpha-D-glucosamine biosynthesis; N-acetyl-alpha-D-glucosamine 1-phosphate from alpha-D-glucosamine 6-phosphate (route II): step 2/2. It functions in the pathway nucleotide-sugar biosynthesis; UDP-N-acetyl-alpha-D-glucosamine biosynthesis; UDP-N-acetyl-alpha-D-glucosamine from N-acetyl-alpha-D-glucosamine 1-phosphate: step 1/1. It participates in bacterial outer membrane biogenesis; LPS lipid A biosynthesis. In terms of biological role, catalyzes the last two sequential reactions in the de novo biosynthetic pathway for UDP-N-acetylglucosamine (UDP-GlcNAc). The C-terminal domain catalyzes the transfer of acetyl group from acetyl coenzyme A to glucosamine-1-phosphate (GlcN-1-P) to produce N-acetylglucosamine-1-phosphate (GlcNAc-1-P), which is converted into UDP-GlcNAc by the transfer of uridine 5-monophosphate (from uridine 5-triphosphate), a reaction catalyzed by the N-terminal domain. The chain is Bifunctional protein GlmU from Thermus thermophilus (strain ATCC 27634 / DSM 579 / HB8).